The chain runs to 432 residues: Tyrosine--tRNA ligase (432 aa).

The short motif at 46-55 (PTRPDLHLGH) is the 'HIGH' region element. The 'KMSKS' region motif lies at 232–236 (KMSKS). Lysine 235 serves as a coordination point for ATP. The 62-residue stretch at 369–430 (IWVARLFTLA…GKDRFVRVRL (62 aa)) folds into the S4 RNA-binding domain.

This sequence belongs to the class-I aminoacyl-tRNA synthetase family. TyrS type 2 subfamily. In terms of assembly, homodimer.

The protein resides in the cytoplasm. It catalyses the reaction tRNA(Tyr) + L-tyrosine + ATP = L-tyrosyl-tRNA(Tyr) + AMP + diphosphate + H(+). Functionally, catalyzes the attachment of tyrosine to tRNA(Tyr) in a two-step reaction: tyrosine is first activated by ATP to form Tyr-AMP and then transferred to the acceptor end of tRNA(Tyr). The chain is Tyrosine--tRNA ligase from Thermus thermophilus (strain ATCC BAA-163 / DSM 7039 / HB27).